Here is a 208-residue protein sequence, read N- to C-terminus: FMN-dependent NADH:quinone oxidoreductase 1 (208 aa).

Residues serine 10, 15–17 (SES), and 97–100 (MWNF) contribute to the FMN site.

The protein belongs to the azoreductase type 1 family. Homodimer. It depends on FMN as a cofactor.

It catalyses the reaction 2 a quinone + NADH + H(+) = 2 a 1,4-benzosemiquinone + NAD(+). The catalysed reaction is N,N-dimethyl-1,4-phenylenediamine + anthranilate + 2 NAD(+) = 2-(4-dimethylaminophenyl)diazenylbenzoate + 2 NADH + 2 H(+). In terms of biological role, quinone reductase that provides resistance to thiol-specific stress caused by electrophilic quinones. Its function is as follows. Also exhibits azoreductase activity. Catalyzes the reductive cleavage of the azo bond in aromatic azo compounds to the corresponding amines. The polypeptide is FMN-dependent NADH:quinone oxidoreductase 1 (Bradyrhizobium diazoefficiens (strain JCM 10833 / BCRC 13528 / IAM 13628 / NBRC 14792 / USDA 110)).